Consider the following 443-residue polypeptide: NADH-quinone oxidoreductase subunit D 1 (443 aa).

The protein belongs to the complex I 49 kDa subunit family. NDH-1 is composed of 14 different subunits. Subunits NuoB, C, D, E, F, and G constitute the peripheral sector of the complex.

It is found in the cell membrane. It catalyses the reaction a quinone + NADH + 5 H(+)(in) = a quinol + NAD(+) + 4 H(+)(out). Functionally, NDH-1 shuttles electrons from NADH, via FMN and iron-sulfur (Fe-S) centers, to quinones in the respiratory chain. The immediate electron acceptor for the enzyme in this species is believed to be a menaquinone. Couples the redox reaction to proton translocation (for every two electrons transferred, four hydrogen ions are translocated across the cytoplasmic membrane), and thus conserves the redox energy in a proton gradient. This is NADH-quinone oxidoreductase subunit D 1 from Streptomyces avermitilis (strain ATCC 31267 / DSM 46492 / JCM 5070 / NBRC 14893 / NCIMB 12804 / NRRL 8165 / MA-4680).